The primary structure comprises 285 residues: Protein phosphatase 1 regulatory subunit 3C (285 aa).

The PP1-binding motif signature appears at 72–75 (KVVF). The 109-residue stretch at 133-241 (RKRLMKNSVC…NNNGKNYALV (109 aa)) folds into the CBM21 domain.

As to quaternary structure, interacts with PPP1CC catalytic subunit of PP1 and associates with glycogen. Forms complexes with glycogen phosphorylase, glycogen synthase and phosphorylase kinase which is necessary for its regulation of PP1 activity. In terms of tissue distribution, ubiquitously expressed in the examined tissues including brain, muscle, liver and spleen under normoxic condition. Its expression is higher in insulin sensitive tissues (liver and muscle) than in the brain and spleen. Significantly increased expression in the liver and muscle under short-term (1-12 hours) hypoxia exposure. Significantly increased expression after long-term (natural) hypoxia exposure in liver and spleen. No significant differences in expression in brain for any time periods.

Functionally, acts as a glycogen-targeting subunit for PP1 and regulates its activity. Activates glycogen synthase, reduces glycogen phosphorylase activity and limits glycogen breakdown. The sequence is that of Protein phosphatase 1 regulatory subunit 3C from Clarias batrachus (Walking catfish).